The primary structure comprises 449 residues: Protein tweety homolog 1-A (449 aa).

Topologically, residues 1–43 are extracellular; sequence MSTSHGYRASWWTNILHQVPHTNFQFEVVDNQFAPQEWPYQQA. The chain crosses the membrane as a helical span at residues 44–64; sequence LLFLASIAGLCLAISLILICV. Residues 65–86 lie on the Cytoplasmic side of the membrane; that stretch reads YLIRFCCCASQEDDDSKNHRVC. A helical membrane pass occupies residues 87-107; that stretch reads CVTWSCVAAVIICCAGIGIGF. The Extracellular portion of the chain corresponds to 108–212; the sequence is YGNSETNDGV…QVNFIEDYRW (105 aa). Residue asparagine 128 is glycosylated (N-linked (GlcNAc...) asparagine). The helical transmembrane segment at 213 to 233 threads the bilayer; sequence LAYILLLLLDLIICLFTLLGL. The Cytoplasmic portion of the chain corresponds to 234 to 238; that stretch reads AKRIK. A helical transmembrane segment spans residues 239-259; the sequence is WLVIVMTVVSFFVLLLSWGSM. Residues 260–388 are Extracellular-facing; the sequence is GLEMATAVGL…LKGLCYDGME (129 aa). Disulfide bonds link cysteine 273/cysteine 383 and cysteine 301/cysteine 368. Asparagine 282 and asparagine 353 each carry an N-linked (GlcNAc...) asparagine glycan. The helical transmembrane segment at 389–409 threads the bilayer; it reads GILFLLLFSFLSALSFTAAVC. Residues 410–449 lie on the Cytoplasmic side of the membrane; it reads SLPRAWKRFQNRDLDYDDMDEDDPFNPQESKRFVQWQSSI.

The protein belongs to the tweety family. As to quaternary structure, homotetramer; disulfide-linked. Homodimer.

It is found in the cell membrane. It carries out the reaction chloride(in) = chloride(out). It catalyses the reaction L-glutamate(out) = L-glutamate(in). May act as a calcium-independent, swelling-dependent volume-regulated anion channel (VRAC-swell) which plays a pivotal role in the process of regulatory volume decrease (RVD) in the brain through the efflux of anions like chloride and organic osmolytes like glutamate. In Xenopus laevis (African clawed frog), this protein is Protein tweety homolog 1-A (ttyh1-a).